We begin with the raw amino-acid sequence, 225 residues long: Membrane protein (225 aa).

At 1–20 (MSNETNCTLDFEQSVELFKE) the chain is on the virion surface side. A helical membrane pass occupies residues 21-41 (YNLFITAFLLFLTIILQYGYA). Over 42–51 (TRSKFIYILK) the chain is Intravirion. Residues 52–72 (MIVLWCFWPLNIAVGVISCIY) traverse the membrane as a helical segment. Topologically, residues 73–77 (PPNTG) are virion surface. A helical membrane pass occupies residues 78 to 98 (GLVAAIILTVFACLSFVGYWI). Topologically, residues 99-225 (QSIRLFKRCR…VATGGSSLYT (127 aa)) are intravirion.

It belongs to the gammacoronaviruses M protein family. Homomultimer. Interacts with envelope E protein in the budding compartment of the host cell, which is located between endoplasmic reticulum and the Golgi complex. Forms a complex with HE and S proteins. Interacts with nucleocapsid N protein. This interaction probably participates in RNA packaging into the virus.

It is found in the virion membrane. It localises to the host Golgi apparatus membrane. Functionally, component of the viral envelope that plays a central role in virus morphogenesis and assembly via its interactions with other viral proteins. This is Membrane protein from Gallus gallus (Chicken).